We begin with the raw amino-acid sequence, 918 residues long: Isoleucine--tRNA ligase 1 (918 aa).

The 'HIGH' region signature appears at 57 to 67 (PYANGDIHIGH). L-isoleucyl-5'-AMP is bound at residue E553. A 'KMSKS' region motif is present at residues 594 to 598 (KMSKS). K597 provides a ligand contact to ATP. Zn(2+)-binding residues include C885, C888, C905, and C908.

This sequence belongs to the class-I aminoacyl-tRNA synthetase family. IleS type 1 subfamily. As to quaternary structure, monomer. Zn(2+) is required as a cofactor.

Its subcellular location is the cytoplasm. It catalyses the reaction tRNA(Ile) + L-isoleucine + ATP = L-isoleucyl-tRNA(Ile) + AMP + diphosphate. Catalyzes the attachment of isoleucine to tRNA(Ile). As IleRS can inadvertently accommodate and process structurally similar amino acids such as valine, to avoid such errors it has two additional distinct tRNA(Ile)-dependent editing activities. One activity is designated as 'pretransfer' editing and involves the hydrolysis of activated Val-AMP. The other activity is designated 'posttransfer' editing and involves deacylation of mischarged Val-tRNA(Ile). This chain is Isoleucine--tRNA ligase 1, found in Oceanobacillus iheyensis (strain DSM 14371 / CIP 107618 / JCM 11309 / KCTC 3954 / HTE831).